We begin with the raw amino-acid sequence, 449 residues long: Secretin receptor (449 aa).

Positions 1 to 25 (MLSTMRPRLSLLLLRLLLLTKAAHT) are cleaved as a signal peptide. Residues 26 to 141 (VGVPPRLCDV…NERRHAYLLK (116 aa)) lie on the Extracellular side of the membrane. 3 disulfides stabilise this stretch: Cys46–Cys75, Cys66–Cys107, and Cys89–Cys123. N-linked (GlcNAc...) asparagine glycosylation is found at Asn72, Asn100, Asn106, and Asn128. The chain crosses the membrane as a helical span at residues 142–167 (LKVMYTVGYSSSLAMLLVALSILCSF). The Cytoplasmic segment spans residues 168–174 (RRLHCTR). Residues 175 to 195 (NYIHMHLFVSFILRALSNFIK) form a helical membrane-spanning segment. The Extracellular portion of the chain corresponds to 196–216 (DAVLFSSDDVTYCDAHKVGCK). Residues Cys215 and Cys285 are joined by a disulfide bond. Residues 217 to 239 (LVMIFFQYCIMANYAWLLVEGLY) form a helical membrane-spanning segment. The Cytoplasmic portion of the chain corresponds to 240–254 (LHTLLAISFFSERKY). Residues 255–276 (LQAFVLLGWGSPAIFVALWAIT) traverse the membrane as a helical segment. Residues 277-291 (RHFLENTGCWDINAN) lie on the Extracellular side of the membrane. A glycan (N-linked (GlcNAc...) asparagine) is linked at Asn291. Residues 292-315 (ASVWWVIRGPVILSILINFIFFIN) form a helical membrane-spanning segment. Residues 316-340 (ILRILMRKLRTQETRGSETNHYKRL) are Cytoplasmic-facing. Residues 341-356 (AKSTLLLIPLFGIHYI) form a helical membrane-spanning segment. At 357–367 (VFAFSPEDAME) the chain is on the extracellular side. The helical transmembrane segment at 368–391 (VQLFFELALGSFQGLVVAVLYCFL) threads the bilayer. At 392 to 449 (NGEVQLEVQKKWRQWHLQEFPLRPVAFNNSFSNATNGPTHSTKASTEQSRSIPRASII) the chain is on the cytoplasmic side. Residues 425-442 (ATNGPTHSTKASTEQSRS) show a composition bias toward polar residues. Residues 425 to 449 (ATNGPTHSTKASTEQSRSIPRASII) are disordered.

This sequence belongs to the G-protein coupled receptor 2 family. In terms of processing, phosphorylated on Ser and Thr residues at the cytoplasmic C-terminus by G protein-coupled receptor kinases (GRKs). N-glycosylated. In terms of tissue distribution, in the brain, expressed in the central amygdala, hippocampus, area postrema, nucleus of the tractus solitary and cerebellum.

The protein localises to the cell membrane. Its subcellular location is the basolateral cell membrane. G protein-coupled receptor activated by secretin (SCT), which is involved in different processes such as regulation of the pH of the duodenal content, food intake and water homeostasis. Ligand binding causes a conformation change that triggers signaling via guanine nucleotide-binding proteins (G proteins) and activates cAMP-dependent pathway. Upon binding to secretin, regulates the pH of the duodenum by (1) inhibiting the secretion of gastric acid from the parietal cells of the stomach and (2) stimulating the production of bicarbonate (NaHCO(3)) from the ductal cells of the pancreas. In addition to regulating the pH of the duodenal content, plays a central role in diet induced thermogenesis: acts as a non-sympathetic brown fat (BAT) activator mediating prandial thermogenesis, which consequentially induces satiation. Mechanistically, secretin released by the gut after a meal binds to secretin receptor (SCTR) in brown adipocytes, activating brown fat thermogenesis by stimulating lipolysis, which is sensed in the brain and promotes satiation. Also able to stimulate lipolysis in white adipocytes. Also plays an important role in cellular osmoregulation by regulating renal water reabsorption. Also plays a role in the central nervous system: required for synaptic plasticity. The protein is Secretin receptor of Rattus norvegicus (Rat).